Reading from the N-terminus, the 161-residue chain is Putative pre-16S rRNA nuclease (161 aa).

It belongs to the YqgF nuclease family.

It is found in the cytoplasm. In terms of biological role, could be a nuclease involved in processing of the 5'-end of pre-16S rRNA. The protein is Putative pre-16S rRNA nuclease of Bradyrhizobium diazoefficiens (strain JCM 10833 / BCRC 13528 / IAM 13628 / NBRC 14792 / USDA 110).